Reading from the N-terminus, the 443-residue chain is ATP-dependent protease ATPase subunit HslU (443 aa).

ATP-binding positions include Ile-18, 60 to 65, Asp-256, Glu-321, and Arg-393; that span reads GVGKTE.

Belongs to the ClpX chaperone family. HslU subfamily. In terms of assembly, a double ring-shaped homohexamer of HslV is capped on each side by a ring-shaped HslU homohexamer. The assembly of the HslU/HslV complex is dependent on binding of ATP.

It localises to the cytoplasm. Its function is as follows. ATPase subunit of a proteasome-like degradation complex; this subunit has chaperone activity. The binding of ATP and its subsequent hydrolysis by HslU are essential for unfolding of protein substrates subsequently hydrolyzed by HslV. HslU recognizes the N-terminal part of its protein substrates and unfolds these before they are guided to HslV for hydrolysis. The sequence is that of ATP-dependent protease ATPase subunit HslU from Vibrio cholerae serotype O1 (strain ATCC 39315 / El Tor Inaba N16961).